Consider the following 59-residue polypeptide: Potassium channel toxin alpha-KTx 15.5 (59 aa).

The signal sequence occupies residues Met1–Cys22. A Pyrrolidone carboxylic acid modification is found at Gln23. Disulfide bonds link Cys30–Cys50, Cys35–Cys55, and Cys39–Cys57.

Belongs to the short scorpion toxin superfamily. Potassium channel inhibitor family. Alpha-KTx 15 subfamily. In terms of tissue distribution, expressed by the venom gland.

Its subcellular location is the secreted. Its function is as follows. Blocker of A-type voltage-gated potassium channels of cerebellar granular cells. May also inhibit Kv4/KCND when coexpressed with DPP6 or DPP10. The occlusion of the outer entry of the K(+) conducting pore is partially reversible and affects both open and closed channels. It shares the same target in rat brain than BmTX3 (AC Q8I0L5) and AmmTX3 (AC P60208). In Androctonus australis (Sahara scorpion), this protein is Potassium channel toxin alpha-KTx 15.5.